Here is a 293-residue protein sequence, read N- to C-terminus: Ribosomal protein L11 methyltransferase (293 aa).

S-adenosyl-L-methionine is bound by residues threonine 145, glycine 166, aspartate 188, and asparagine 230.

The protein belongs to the methyltransferase superfamily. PrmA family.

It is found in the cytoplasm. It catalyses the reaction L-lysyl-[protein] + 3 S-adenosyl-L-methionine = N(6),N(6),N(6)-trimethyl-L-lysyl-[protein] + 3 S-adenosyl-L-homocysteine + 3 H(+). Functionally, methylates ribosomal protein L11. The polypeptide is Ribosomal protein L11 methyltransferase (Escherichia coli O8 (strain IAI1)).